The sequence spans 573 residues: NADP-dependent malic enzyme, chloroplastic (573 aa).

Residue tyrosine 123 is the Proton donor of the active site. Residue arginine 176 coordinates NAD(+). Catalysis depends on lysine 194, which acts as the Proton acceptor. A divalent metal cation-binding residues include glutamate 265, aspartate 266, and aspartate 289. Residue aspartate 289 coordinates NAD(+). An NADP(+)-binding site is contributed by 318-334 (LFLGAGEAGTGIAELIA). Residue asparagine 430 coordinates NAD(+).

It belongs to the malic enzymes family. Homotetramer. It depends on Mg(2+) as a cofactor. Requires Mn(2+) as cofactor.

The protein localises to the plastid. Its subcellular location is the chloroplast. The enzyme catalyses (S)-malate + NADP(+) = pyruvate + CO2 + NADPH. The catalysed reaction is oxaloacetate + H(+) = pyruvate + CO2. It participates in photosynthesis; C4 acid pathway. Functionally, the chloroplastic ME isoform decarboxylates malate shuttled from neighboring mesophyll cells. The CO(2) released is then refixed by ribulose-bisphosphate carboxylase. This pathway eliminates the photorespiratory loss of CO(2) that occurs in most plants. In Solanum lycopersicum (Tomato), this protein is NADP-dependent malic enzyme, chloroplastic.